The following is a 156-amino-acid chain: Ribosome maturation factor RimP (156 aa).

Belongs to the RimP family.

It localises to the cytoplasm. Its function is as follows. Required for maturation of 30S ribosomal subunits. The chain is Ribosome maturation factor RimP from Bacillus subtilis (strain 168).